A 298-amino-acid polypeptide reads, in one-letter code: Porphobilinogen deaminase (298 aa).

Position 239 is an S-(dipyrrolylmethanemethyl)cysteine (C239).

It belongs to the HMBS family. Monomer. Dipyrromethane is required as a cofactor.

The catalysed reaction is 4 porphobilinogen + H2O = hydroxymethylbilane + 4 NH4(+). Its pathway is porphyrin-containing compound metabolism; protoporphyrin-IX biosynthesis; coproporphyrinogen-III from 5-aminolevulinate: step 2/4. Functionally, tetrapolymerization of the monopyrrole PBG into the hydroxymethylbilane pre-uroporphyrinogen in several discrete steps. In Ehrlichia chaffeensis (strain ATCC CRL-10679 / Arkansas), this protein is Porphobilinogen deaminase.